The chain runs to 546 residues: Germacrene-D synthase (546 aa).

Residues Asp303, Asp307, Asp448, and Glu456 each coordinate Mg(2+). The DDXXD motif signature appears at 303 to 307; sequence DDIYD.

It belongs to the terpene synthase family. The cofactor is Mg(2+). Requires Mn(2+) as cofactor.

The enzyme catalyses (2E,6E)-farnesyl diphosphate = (-)-germacrene D + diphosphate. The protein operates within secondary metabolite biosynthesis; terpenoid biosynthesis. Sesquiterpene synthase that catalyzes the formation of germacrene D from trans,trans-farnesyl diphosphate (FPP). The polypeptide is Germacrene-D synthase (GDS) (Ocimum basilicum (Sweet basil)).